A 139-amino-acid chain; its full sequence is Large ribosomal subunit protein uL13 (139 aa).

Belongs to the universal ribosomal protein uL13 family. As to quaternary structure, part of the 50S ribosomal subunit.

Its function is as follows. This protein is one of the early assembly proteins of the 50S ribosomal subunit, although it is not seen to bind rRNA by itself. It is important during the early stages of 50S assembly. This Wolinella succinogenes (strain ATCC 29543 / DSM 1740 / CCUG 13145 / JCM 31913 / LMG 7466 / NCTC 11488 / FDC 602W) (Vibrio succinogenes) protein is Large ribosomal subunit protein uL13.